We begin with the raw amino-acid sequence, 100 residues long: MIPLSHGLILAFFLFSLGFVSLVMHKNILFMLISLEIMINSAALALVVVGNYWNQVDGQIMYILILTLGASESSIGLALLIQCYRHFKTLNIDKLSEMNG.

3 helical membrane-spanning segments follow: residues 4–24 (LSHG…SLVM), 28–48 (ILFM…ALVV), and 60–80 (IMYI…LALL).

Belongs to the complex I subunit 4L family. As to quaternary structure, NDH-1 is composed of 13 different subunits. Subunits NuoA, H, J, K, L, M, N constitute the membrane sector of the complex.

The protein localises to the cell membrane. The catalysed reaction is a quinone + NADH + 5 H(+)(in) = a quinol + NAD(+) + 4 H(+)(out). Its function is as follows. NDH-1 shuttles electrons from NADH, via FMN and iron-sulfur (Fe-S) centers, to quinones in the respiratory chain. The immediate electron acceptor for the enzyme in this species is believed to be ubiquinone. Couples the redox reaction to proton translocation (for every two electrons transferred, four hydrogen ions are translocated across the cytoplasmic membrane), and thus conserves the redox energy in a proton gradient. This Buchnera aphidicola subsp. Baizongia pistaciae (strain Bp) protein is NADH-quinone oxidoreductase subunit K.